The sequence spans 234 residues: Opacity protein opA56 (234 aa).

Ala1 is a signal peptide.

Belongs to the opacity porin family.

The protein localises to the cell outer membrane. Its function is as follows. Implicated in a number of adherence functions. OPA proteins are implicated in pathogenesis and are subject to phase variation. The protein is Opacity protein opA56 (opaF) of Neisseria gonorrhoeae.